Reading from the N-terminus, the 250-residue chain is Octanoyltransferase (250 aa).

The BPL/LPL catalytic domain occupies 49–230; it reads DEINDVILVL…ALDDAFAGRL (182 aa). Substrate is bound by residues 87–94, 160–162, and 173–175; these read RGGRITWH, ALG, and GLA. Cysteine 191 acts as the Acyl-thioester intermediate in catalysis.

This sequence belongs to the LipB family.

The protein localises to the cytoplasm. The enzyme catalyses octanoyl-[ACP] + L-lysyl-[protein] = N(6)-octanoyl-L-lysyl-[protein] + holo-[ACP] + H(+). The protein operates within protein modification; protein lipoylation via endogenous pathway; protein N(6)-(lipoyl)lysine from octanoyl-[acyl-carrier-protein]: step 1/2. Catalyzes the transfer of endogenously produced octanoic acid from octanoyl-acyl-carrier-protein onto the lipoyl domains of lipoate-dependent enzymes. Lipoyl-ACP can also act as a substrate although octanoyl-ACP is likely to be the physiological substrate. The sequence is that of Octanoyltransferase from Corynebacterium diphtheriae (strain ATCC 700971 / NCTC 13129 / Biotype gravis).